The following is a 575-amino-acid chain: V-type ATP synthase alpha chain (575 aa).

Residue 238–245 (GPFGAGKT) participates in ATP binding.

The protein belongs to the ATPase alpha/beta chains family.

The enzyme catalyses ATP + H2O + 4 H(+)(in) = ADP + phosphate + 5 H(+)(out). Functionally, produces ATP from ADP in the presence of a proton gradient across the membrane. The V-type alpha chain is a catalytic subunit. The protein is V-type ATP synthase alpha chain of Borreliella afzelii (strain PKo) (Borrelia afzelii).